The chain runs to 409 residues: Probable glutaryl-CoA dehydrogenase, mitochondrial (409 aa).

110–111 (RS) serves as a coordination point for substrate. Residues 149 to 152 (FGLT), S158, and 184 to 186 (WIS) contribute to the FAD site. S158 serves as a coordination point for substrate. Residues 261 to 265 (FGCLN) and R268 each bind substrate. E388 acts as the Proton acceptor in catalysis. Positions 390 and 408 each coordinate FAD.

It belongs to the acyl-CoA dehydrogenase family. FAD serves as cofactor.

Its subcellular location is the mitochondrion matrix. It catalyses the reaction glutaryl-CoA + oxidized [electron-transfer flavoprotein] + 2 H(+) = (2E)-butenoyl-CoA + reduced [electron-transfer flavoprotein] + CO2. Its pathway is amino-acid metabolism; lysine degradation. It functions in the pathway amino-acid metabolism; tryptophan metabolism. This chain is Probable glutaryl-CoA dehydrogenase, mitochondrial, found in Caenorhabditis elegans.